Reading from the N-terminus, the 75-residue chain is Protein Tlp homolog (75 aa).

A disordered region spans residues R53–M75.

This sequence belongs to the Tlp family.

In Clostridium botulinum (strain Langeland / NCTC 10281 / Type F), this protein is Protein Tlp homolog.